The chain runs to 260 residues: Snake venom serine protease KN5 (260 aa).

The first 18 residues, 1 to 18 (MVLIRVLANLLILQLSYA), serve as a signal peptide directing secretion. The propeptide occupies 19-24 (QKSSEL). Residues 25–251 (VIGGDECNIN…HLDWIQSIIA (227 aa)) enclose the Peptidase S1 domain. Intrachain disulfides connect cysteine 31–cysteine 165, cysteine 100–cysteine 258, cysteine 144–cysteine 212, cysteine 176–cysteine 191, and cysteine 202–cysteine 227. Histidine 67 (charge relay system) is an active-site residue. Asparagine 105 carries N-linked (GlcNAc...) asparagine glycosylation. The active-site Charge relay system is the aspartate 112. N-linked (GlcNAc...) asparagine glycans are attached at residues asparagine 124 and asparagine 172. Serine 206 functions as the Charge relay system in the catalytic mechanism. Residues asparagine 213 and asparagine 255 are each glycosylated (N-linked (GlcNAc...) asparagine).

This sequence belongs to the peptidase S1 family. Snake venom subfamily. As to quaternary structure, monomer. In terms of tissue distribution, expressed by the venom gland.

It localises to the secreted. Functionally, snake venom serine protease that may act in the hemostasis system of the prey. The chain is Snake venom serine protease KN5 from Trimeresurus stejnegeri (Chinese green tree viper).